The following is a 674-amino-acid chain: Fidgetin-like protein 1 (674 aa).

The interval 157–179 is disordered; that stretch reads SQESDSLPNSAHDRDRTQDFPES. A compositionally biased stretch (basic and acidic residues) spans 167 to 179; sequence AHDRDRTQDFPES. Lysine 225 participates in a covalent cross-link: Glycyl lysine isopeptide (Lys-Gly) (interchain with G-Cter in SUMO2). The residue at position 259 (serine 259) is a Phosphoserine. A necessary and sufficient for interaction with RAD51 region spans residues 295 to 344; sequence FKTAKEQLWVDQQKKYHQPQRASGSSYGGVKKSLGASRSRGILGKFVPPI. At lysine 339 the chain carries N6-acetyllysine. Residues alanine 404 and 444–449 each bind ATP; that span reads GTGKTL.

Belongs to the AAA ATPase family. In terms of assembly, hexamer. Interacts (via N-terminal one-half region) with RAD51; the interaction is direct. Interacts (via N-terminal one-half region) with SPIDR (via the C-terminal region); the interaction is direct. Interacts with FIRRM; may regulate homologous recombination. Requires Mg(2+) as cofactor.

The protein resides in the nucleus. Its subcellular location is the cytoplasm. The protein localises to the perinuclear region. The catalysed reaction is ATP + H2O = ADP + phosphate + H(+). In terms of biological role, involved in DNA double-strand break (DBS) repair via homologous recombination (HR). Recruited at DSB sites independently of BRCA2, RAD51 and RAD51 paralogs in a H2AX-dependent manner. May regulate osteoblast proliferation and differentiation. May play a role in the control of male meiosis dynamic. The sequence is that of Fidgetin-like protein 1 (FIGNL1) from Homo sapiens (Human).